Here is a 124-residue protein sequence, read N- to C-terminus: Meiotically up-regulated gene 103 protein (124 aa).

It is found in the nucleus. The protein localises to the nucleolus. Functionally, has a role in meiosis. In Schizosaccharomyces pombe (strain 972 / ATCC 24843) (Fission yeast), this protein is Meiotically up-regulated gene 103 protein (mug103).